Consider the following 413-residue polypeptide: Cardiolipin synthase B (413 aa).

PLD phosphodiesterase domains lie at 108-135 and 285-312; these read VFRR…SSEH and RRRP…DPLS. Active-site residues include His113, Lys115, Asp120, His290, Lys292, and Asp297. The disordered stretch occupies residues 388–413; it reads TQVDPPAQPTMETQDRVETENTGVNP.

This sequence belongs to the phospholipase D family. Cardiolipin synthase subfamily. ClsB sub-subfamily.

The protein localises to the cell membrane. It catalyses the reaction 2 a 1,2-diacyl-sn-glycero-3-phospho-(1'-sn-glycerol) = a cardiolipin + glycerol. Functionally, catalyzes the phosphatidyl group transfer from one phosphatidylglycerol molecule to another to form cardiolipin (CL) (diphosphatidylglycerol) and glycerol. This chain is Cardiolipin synthase B, found in Shigella flexneri.